The sequence spans 594 residues: Developmental and secondary metabolism regulator veA (594 aa).

In terms of domain architecture, Velvet spans 24–220 (GRRLFYRIDV…AEQGTRVRIR (197 aa)). The Nuclear localization signal motif lies at 38-43 (EKCRAC). Disordered regions lie at residues 40 to 59 (CRAC…VDPP) and 210 to 558 (MAEQ…DVEE). Over residues 217-229 (VRIRRDVRMRRRD) the composition is skewed to basic residues. Pro residues predominate over residues 296–307 (APPPPNPPPPGF). Residues 327 to 351 (SHSQYQQPTSSSSSSEQVSSVPQSP) are compositionally biased toward low complexity. The segment covering 352–362 (AYSSHAAQQHY) has biased composition (polar residues). Residues 374 to 383 (PERRLSDHRS) show a composition bias toward basic and acidic residues. Residues 384 to 403 (SQPNNHPQQSPHQHSYSHRS) are compositionally biased toward low complexity. Residues 405–416 (PQRERFMPDSRR) show a composition bias toward basic and acidic residues. A PEST region spans residues 457–506 (VADTQATPHLPPIRWPRPNMNLPSPPSEHQEALQPLQPAPLHYESQTHQQ). Residues 523–538 (YSYGYSYSHNHSHGYG) show a composition bias toward low complexity.

This sequence belongs to the velvet family. VeA subfamily. In terms of assembly, component of the heterotrimeric velvet complex composed of LAEA, VEA and VELB; VEA acting as a bridging protein between LAEA and VELB.

Its subcellular location is the nucleus. The protein localises to the cytoplasm. Its function is as follows. Component of the velvet transcription factor complex that controls sexual/asexual developmental ratio in response to light, promoting sexual development in the darkness while stimulating asexual sporulation under illumination. The velvet complex acts as a global regulator for secondary metabolite gene expression. Regulates of the response to reactive oxygen species (ROS) stress. The polypeptide is Developmental and secondary metabolism regulator veA (Pyricularia oryzae (strain 70-15 / ATCC MYA-4617 / FGSC 8958) (Rice blast fungus)).